Consider the following 126-residue polypeptide: Cell cycle protein GpsB (126 aa).

The stretch at 35-72 (LDLVIKDYQTYQENIDRLTADNTRLFNKVEELNRQLSA) forms a coiled coil.

Belongs to the GpsB family. Forms polymers through the coiled coil domains. Interacts with PBP1, MreC and EzrA.

The protein localises to the cytoplasm. In terms of biological role, divisome component that associates with the complex late in its assembly, after the Z-ring is formed, and is dependent on DivIC and PBP2B for its recruitment to the divisome. Together with EzrA, is a key component of the system that regulates PBP1 localization during cell cycle progression. Its main role could be the removal of PBP1 from the cell pole after pole maturation is completed. Also contributes to the recruitment of PBP1 to the division complex. Not essential for septum formation. The sequence is that of Cell cycle protein GpsB from Latilactobacillus sakei subsp. sakei (strain 23K) (Lactobacillus sakei subsp. sakei).